A 452-amino-acid polypeptide reads, in one-letter code: Na(+)/H(+) antiporter NhaA (452 aa).

The next 11 membrane-spanning stretches (helical) occupy residues 23 to 43 (MMLFLASVLAVIMANSSLSTI), 71 to 91 (LLQFVNDVLMVIFFLAVGLEI), 108 to 128 (LPIVGAIGGMIVPVLFFLLVV), 136 to 156 (GAAIPMSTDIAFALAALAVLG), 165 to 185 (VFLTALAVADDIGGIIVIALF), 189 to 209 (HINIGMLAIAFGILFIMYLMG), 216 to 236 (LGLYFVCTFFVWLFFLQSGIH), 316 to 336 (IVGYFVLPLFAFANAGITLGG), 349 to 369 (VFLGLFVGKPLGIYFFTYGFV), 385 to 405 (LMAVSLFGGIGFTVSLFIATL), and 418 to 438 (EAKLGIFVASIFAALVGIVTL).

The protein belongs to the NhaA Na(+)/H(+) (TC 2.A.33) antiporter family.

The protein resides in the cell inner membrane. It catalyses the reaction Na(+)(in) + 2 H(+)(out) = Na(+)(out) + 2 H(+)(in). Its function is as follows. Na(+)/H(+) antiporter that extrudes sodium in exchange for external protons. The sequence is that of Na(+)/H(+) antiporter NhaA from Porphyromonas gingivalis (strain ATCC BAA-308 / W83).